The following is a 75-amino-acid chain: Putative sulfur carrier protein TsuB (75 aa).

Cys-13 serves as the catalytic Cysteine persulfide intermediate.

The protein belongs to the sulfur carrier protein TusA family.

In terms of biological role, involved in thiosulfate metabolism. The polypeptide is Putative sulfur carrier protein TsuB (Escherichia coli (strain K12)).